The chain runs to 66 residues: Large ribosomal subunit protein bL35 (66 aa).

This sequence belongs to the bacterial ribosomal protein bL35 family. As to quaternary structure, part of the 50S ribosomal subunit. Contacts proteins L15 and L33.

Its function is as follows. Binds the 23S rRNA. This chain is Large ribosomal subunit protein bL35 (rpmI), found in Deinococcus radiodurans (strain ATCC 13939 / DSM 20539 / JCM 16871 / CCUG 27074 / LMG 4051 / NBRC 15346 / NCIMB 9279 / VKM B-1422 / R1).